The primary structure comprises 152 residues: Large ribosomal subunit protein bL9 (152 aa).

Belongs to the bacterial ribosomal protein bL9 family.

Functionally, binds to the 23S rRNA. The chain is Large ribosomal subunit protein bL9 from Thermosynechococcus vestitus (strain NIES-2133 / IAM M-273 / BP-1).